A 382-amino-acid chain; its full sequence is B3 domain-containing protein Os03g0622100 (382 aa).

Residues 29-123 constitute a DNA-binding region (TF-B3 1); it reads CKHFLTYMVG…SFDVLIFDPS (95 aa). 2 stretches are compositionally biased toward basic and acidic residues: residues 136–158 and 193–202; these read RGFG…DKNG and QDHREEKKEG. A disordered region spans residues 136–222; that stretch reads RGFGREEKSA…EDVDKDGEDR (87 aa). Residues 203 to 218 show a composition bias toward acidic residues; the sequence is DDEDEDEDEDEDVDKD. The segment at residues 261-363 is a DNA-binding region (TF-B3 2); it reads KVIHASHLLS…AGDRLRRRPR (103 aa).

It is found in the nucleus. This Oryza sativa subsp. japonica (Rice) protein is B3 domain-containing protein Os03g0622100.